An 82-amino-acid polypeptide reads, in one-letter code: Acyl carrier protein (82 aa).

One can recognise a Carrier domain in the interval 4-79 (EKIFQELKNI…DVVDIIESNL (76 aa)). The residue at position 39 (S39) is an O-(pantetheine 4'-phosphoryl)serine.

It belongs to the acyl carrier protein (ACP) family. Post-translationally, 4'-phosphopantetheine is transferred from CoA to a specific serine of apo-ACP by AcpS. This modification is essential for activity because fatty acids are bound in thioester linkage to the sulfhydryl of the prosthetic group.

It is found in the cytoplasm. It functions in the pathway lipid metabolism; fatty acid biosynthesis. Carrier of the growing fatty acid chain in fatty acid biosynthesis. The sequence is that of Acyl carrier protein from Coprothermobacter proteolyticus (strain ATCC 35245 / DSM 5265 / OCM 4 / BT).